The primary structure comprises 568 residues: UPF0313 protein FN0734 (568 aa).

One can recognise a Radical SAM core domain in the interval 289–562; it reads ALDTIKYSVT…KQKQKDIVTE (274 aa). Positions 303, 307, and 310 each coordinate [4Fe-4S] cluster. The disordered stretch occupies residues 546–568; that stretch reads VEKDNGKKQKQKDIVTEKRKNRK.

Belongs to the UPF0313 family. [4Fe-4S] cluster is required as a cofactor.

This Fusobacterium nucleatum subsp. nucleatum (strain ATCC 25586 / DSM 15643 / BCRC 10681 / CIP 101130 / JCM 8532 / KCTC 2640 / LMG 13131 / VPI 4355) protein is UPF0313 protein FN0734.